Reading from the N-terminus, the 308-residue chain is uncharacterized protein (308 aa).

This is an uncharacterized protein from Mycoplasmoides gallisepticum (strain R(low / passage 15 / clone 2)) (Mycoplasma gallisepticum).